The primary structure comprises 201 residues: Peptidyl-tRNA hydrolase (201 aa).

Tyr15 serves as a coordination point for tRNA. The active-site Proton acceptor is the His20. TRNA-binding residues include Tyr66, Asn68, and Asn114.

The protein belongs to the PTH family. Monomer.

Its subcellular location is the cytoplasm. It carries out the reaction an N-acyl-L-alpha-aminoacyl-tRNA + H2O = an N-acyl-L-amino acid + a tRNA + H(+). Its function is as follows. Hydrolyzes ribosome-free peptidyl-tRNAs (with 1 or more amino acids incorporated), which drop off the ribosome during protein synthesis, or as a result of ribosome stalling. In terms of biological role, catalyzes the release of premature peptidyl moieties from peptidyl-tRNA molecules trapped in stalled 50S ribosomal subunits, and thus maintains levels of free tRNAs and 50S ribosomes. This is Peptidyl-tRNA hydrolase from Burkholderia thailandensis (strain ATCC 700388 / DSM 13276 / CCUG 48851 / CIP 106301 / E264).